The sequence spans 308 residues: Cilia- and flagella-associated protein 73 (308 aa).

Coiled-coil stretches lie at residues 103–134 (RIQK…LEKN) and 164–227 (LSAT…QEAK).

It belongs to the CFAP73 family. As to quaternary structure, interacts with FAP100; form the modifier of inner arm (MIA) complex.

The protein resides in the cytoplasm. It localises to the cytoskeleton. The protein localises to the flagellum axoneme. As part of MIA, a complex associated with the outer doublet microtubules of the axoneme, may play a role in ciliary/flagellar motility by regulating the assembly and the activity of inner dynein arm. This is Cilia- and flagella-associated protein 73 from Chlamydomonas reinhardtii (Chlamydomonas smithii).